We begin with the raw amino-acid sequence, 94 residues long: Co-chaperonin GroES (94 aa).

It belongs to the GroES chaperonin family. Heptamer of 7 subunits arranged in a ring. Interacts with the chaperonin GroEL.

Its subcellular location is the cytoplasm. Functionally, together with the chaperonin GroEL, plays an essential role in assisting protein folding. The GroEL-GroES system forms a nano-cage that allows encapsulation of the non-native substrate proteins and provides a physical environment optimized to promote and accelerate protein folding. GroES binds to the apical surface of the GroEL ring, thereby capping the opening of the GroEL channel. This chain is Co-chaperonin GroES, found in Clostridium kluyveri (strain NBRC 12016).